The primary structure comprises 472 residues: Putative cytochrome P450 135B1 (472 aa).

Cys388 is a binding site for heme. The interval 442–472 (RDVSATSQATAQGAGCPAARGGGPSRAVGSQ) is disordered. Over residues 452–472 (AQGAGCPAARGGGPSRAVGSQ) the composition is skewed to low complexity.

It belongs to the cytochrome P450 family. Heme is required as a cofactor.

This chain is Putative cytochrome P450 135B1 (cyp135B1), found in Mycobacterium bovis (strain ATCC BAA-935 / AF2122/97).